Here is a 331-residue protein sequence, read N- to C-terminus: ADP-L-glycero-D-manno-heptose-6-epimerase (331 aa).

Residues 11–12, 32–33, lysine 39, lysine 54, 75–79, and asparagine 92 each bind NADP(+); these read FI, DN, and LGACT. Tyrosine 139 serves as the catalytic Proton acceptor. Lysine 143 serves as a coordination point for NADP(+). Asparagine 168 is a substrate binding site. Residues valine 169 and lysine 177 each contribute to the NADP(+) site. Catalysis depends on lysine 177, which acts as the Proton acceptor. Substrate contacts are provided by residues arginine 179, glutamine 186, 200-203, histidine 213, and tyrosine 292; that span reads FGEH.

The protein belongs to the NAD(P)-dependent epimerase/dehydratase family. HldD subfamily. In terms of assembly, homopentamer. NADP(+) is required as a cofactor.

It carries out the reaction ADP-D-glycero-beta-D-manno-heptose = ADP-L-glycero-beta-D-manno-heptose. Its pathway is nucleotide-sugar biosynthesis; ADP-L-glycero-beta-D-manno-heptose biosynthesis; ADP-L-glycero-beta-D-manno-heptose from D-glycero-beta-D-manno-heptose 7-phosphate: step 4/4. In terms of biological role, catalyzes the interconversion between ADP-D-glycero-beta-D-manno-heptose and ADP-L-glycero-beta-D-manno-heptose via an epimerization at carbon 6 of the heptose. This chain is ADP-L-glycero-D-manno-heptose-6-epimerase, found in Cupriavidus pinatubonensis (strain JMP 134 / LMG 1197) (Cupriavidus necator (strain JMP 134)).